Consider the following 73-residue polypeptide: Metallothionein (73 aa).

16 residues coordinate Cd(2+): Cys15, Cys20, Cys26, Cys28, Cys32, Cys34, Cys39, Cys46, Cys48, Cys52, Cys54, Cys58, Cys64, Cys66, Cys70, and Cys72.

It belongs to the metallothionein superfamily. Type 2 family.

Its function is as follows. The metallothioneins are involved in the cellular sequestration of toxic metal ions. The sequence is that of Metallothionein from Dreissena polymorpha (Zebra mussel).